The primary structure comprises 252 residues: Isoprenyl transferase (252 aa).

The active site involves Asp32. Residue Asp32 coordinates Mg(2+). Residues 33 to 36 (GNGR), Trp37, Arg45, His49, and 77 to 79 (STE) contribute to the substrate site. Asn80 functions as the Proton acceptor in the catalytic mechanism. Substrate is bound by residues Trp81, Arg83, Arg200, and 206 to 208 (RLS). Glu219 is a binding site for Mg(2+).

It belongs to the UPP synthase family. In terms of assembly, homodimer. Mg(2+) serves as cofactor.

Catalyzes the condensation of isopentenyl diphosphate (IPP) with allylic pyrophosphates generating different type of terpenoids. This is Isoprenyl transferase from Listeria innocua serovar 6a (strain ATCC BAA-680 / CLIP 11262).